The following is a 151-amino-acid chain: Ubiquitin-conjugating enzyme E2 W (151 aa).

Met1 is covalently cross-linked (Peptide (Met-Gly) (interchain with G-Cter in ubiquitin)). One can recognise a UBC core domain in the interval 3–151 (SMQKRLQKEL…TKWWYHDDTC (149 aa)). The active-site Glycyl thioester intermediate is the Cys91.

Belongs to the ubiquitin-conjugating enzyme family. As to quaternary structure, homodimer. Interacts with FANCL. Interacts with STUB1/CHIP. Post-translationally, autoubiquitinated at Met-1.

The protein localises to the nucleus. It carries out the reaction S-ubiquitinyl-[E1 ubiquitin-activating enzyme]-L-cysteine + [E2 ubiquitin-conjugating enzyme]-L-cysteine = [E1 ubiquitin-activating enzyme]-L-cysteine + S-ubiquitinyl-[E2 ubiquitin-conjugating enzyme]-L-cysteine.. The enzyme catalyses S-ubiquitinyl-[E1 ubiquitin-activating enzyme]-L-cysteine + [acceptor protein]-N-terminal-amino acid = [E1 ubiquitin-activating enzyme]-L-cysteine + N-terminal-ubiquitinyl-[acceptor protein].. It participates in protein modification; protein ubiquitination. Functionally, accepts ubiquitin from the E1 complex and catalyzes its covalent attachment to other proteins. Specifically monoubiquitinates the N-terminus of various substrates, including ATXN3, MAPT/TAU, POLR2H/RPB8 and STUB1/CHIP, by recognizing backbone atoms of disordered N-termini. Involved in degradation of misfolded chaperone substrates by mediating monoubiquitination of STUB1/CHIP, leading to recruitment of ATXN3 to monoubiquitinated STUB1/CHIP, and restriction of the length of ubiquitin chain attached to STUB1/CHIP substrates by ATXN3. After UV irradiation, but not after mitomycin-C (MMC) treatment, acts as a specific E2 ubiquitin-conjugating enzyme for the Fanconi anemia complex by associating with E3 ubiquitin-protein ligase FANCL and catalyzing monoubiquitination of FANCD2, a key step in the DNA damage pathway. In vitro catalyzes 'Lys-11'-linked polyubiquitination. UBE2W-catalyzed ubiquitination also occurs in the presence of inactive RING/U-box type E3s, i.e. lacking the active site cysteine residues to form thioester bonds with ubiquitin, or even in the absence of E3, albeit at a slower rate. The chain is Ubiquitin-conjugating enzyme E2 W (Ube2w) from Mus musculus (Mouse).